A 293-amino-acid polypeptide reads, in one-letter code: Protein transport protein yif1 (293 aa).

Residues 1–139 are Cytoplasmic-facing; that stretch reads MPPKLYHPQP…PPAEDLNSPD (139 aa). The chain crosses the membrane as a helical span at residues 140–160; that stretch reads MYIPLMAFTTHILLLCALAGL. Residues 161–175 are Lumenal-facing; sequence QDDFQPELFGLRASK. A helical membrane pass occupies residues 176-196; the sequence is ACAVVLVEFLATRLGCYLLNI. The Cytoplasmic segment spans residues 197 to 201; it reads SSQSQ. The helical transmembrane segment at 202–222 threads the bilayer; that stretch reads VLDLLAFSGYKFVGLILTSLS. Topologically, residues 223–226 are lumenal; that stretch reads KLFE. Residues 227–247 form a helical membrane-spanning segment; it reads MPWVTRFVFLYMYLATAFFLL. The Cytoplasmic segment spans residues 248-271; it reads RSLKYAVLPESTMAINATITSHQR. Residues 272-292 traverse the membrane as a helical segment; that stretch reads SRRIYFLFFIAASQILFMYVL. Position 293 (Ser293) is a topological domain, lumenal.

The protein belongs to the YIF1 family. In terms of assembly, component of the yip1-yif1 complex, composed of at least yif1, yip1 and yos1. The complex interacts with the ER to Golgi SNAREs bos1 and sec22.

It localises to the endoplasmic reticulum membrane. The protein localises to the golgi apparatus membrane. The protein resides in the cytoplasmic vesicle. Its subcellular location is the COPII-coated vesicle. Its function is as follows. Required for fusion of ER-derived vesicles with the Golgi during ER-to-Golgi protein transport. May be involved in proper membrane localization of Rab GTPases. This Schizosaccharomyces pombe (strain 972 / ATCC 24843) (Fission yeast) protein is Protein transport protein yif1.